The sequence spans 202 residues: Ribosome maturation factor RimM (202 aa).

A PRC barrel domain is found at 121-202 (KDEYYWVDLI…CITVDWQPDY (82 aa)).

Belongs to the RimM family. As to quaternary structure, binds ribosomal protein uS19.

Its subcellular location is the cytoplasm. Functionally, an accessory protein needed during the final step in the assembly of 30S ribosomal subunit, possibly for assembly of the head region. Essential for efficient processing of 16S rRNA. May be needed both before and after RbfA during the maturation of 16S rRNA. It has affinity for free ribosomal 30S subunits but not for 70S ribosomes. The sequence is that of Ribosome maturation factor RimM from Polaromonas sp. (strain JS666 / ATCC BAA-500).